Reading from the N-terminus, the 249-residue chain is Isoprenyl transferase 1 (249 aa).

Asp-30 is a catalytic residue. Asp-30 is a binding site for Mg(2+). Substrate contacts are provided by residues 31–34 (GNGR), Trp-35, Arg-43, His-47, and 75–77 (STE). The active-site Proton acceptor is Asn-78. Substrate-binding positions include Trp-79, Arg-81, Arg-198, and 204–206 (RMS). Glu-217 provides a ligand contact to Mg(2+).

Belongs to the UPP synthase family. Homodimer. Mg(2+) is required as a cofactor.

Functionally, catalyzes the condensation of isopentenyl diphosphate (IPP) with allylic pyrophosphates generating different type of terpenoids. This chain is Isoprenyl transferase 1, found in Tropheryma whipplei (strain Twist) (Whipple's bacillus).